The primary structure comprises 298 residues: tRNA (guanine(9)-N1)-methyltransferase (298 aa).

Positions 1 to 10 are enriched in polar residues; sequence MSDTSENSNA. The segment at 1–44 is disordered; sequence MSDTSENSNAEIPADTSDVKDKPKPIVRAPQFPPPPEGISKSQW. One can recognise an SAM-dependent MTase TRM10-type domain in the interval 96-285; the sequence is PPKVNLNQSD…SVLPPRKLEV (190 aa). S-adenosyl-L-methionine is bound by residues 192–193, Gly-212, 216–220, Cys-224, Leu-238, and 250–252; these read LT, DKNRH, and KVL. Asp-216 serves as the catalytic Proton acceptor.

The protein belongs to the class IV-like SAM-binding methyltransferase superfamily. TRM10 family. In terms of assembly, monomer.

The protein localises to the cytoplasm. The protein resides in the nucleus. It catalyses the reaction guanosine(9) in tRNA + S-adenosyl-L-methionine = N(1)-methylguanosine(9) in tRNA + S-adenosyl-L-homocysteine + H(+). In terms of biological role, S-adenosyl-L-methionine-dependent guanine N(1)-methyltransferase that catalyzes the formation of N(1)-methylguanine at position 9 (m1G9) in cytoplasmic tRNA. The sequence is that of tRNA (guanine(9)-N1)-methyltransferase from Kluyveromyces lactis (strain ATCC 8585 / CBS 2359 / DSM 70799 / NBRC 1267 / NRRL Y-1140 / WM37) (Yeast).